The chain runs to 220 residues: Adenylate kinase (220 aa).

Residue 13–18 participates in ATP binding; sequence GAGKGT. Residues 33–62 are NMP; the sequence is ATGDMLRSQVARQTELGKEAKKIMDQGGLV. AMP-binding positions include Thr-34, Arg-39, 60 to 62, 89 to 92, and Gln-96; these read GLV and GFPR. Positions 130 to 167 are LID; sequence GRLVHPGSGRSYHLEFNPPKVPMKDDVTGEPLIQRSDD. ATP contacts are provided by residues Arg-131 and 140–141; that span reads SY. Positions 164 and 175 each coordinate AMP. Gln-203 contributes to the ATP binding site.

It belongs to the adenylate kinase family. AK2 subfamily. As to quaternary structure, monomer.

Its subcellular location is the cytoplasm. It localises to the cytosol. It is found in the mitochondrion intermembrane space. The protein localises to the nucleus. The catalysed reaction is AMP + ATP = 2 ADP. Its function is as follows. Catalyzes the reversible transfer of the terminal phosphate group between ATP and AMP. Plays an important role in cellular energy homeostasis and in adenine nucleotide metabolism. Adenylate kinase activity is critical for regulation of the phosphate utilization and the AMP de novo biosynthesis pathways. This is Adenylate kinase (adk1) from Schizosaccharomyces pombe (strain 972 / ATCC 24843) (Fission yeast).